The primary structure comprises 441 residues: Ankyrin repeat and MYND domain-containing protein 2 (441 aa).

ANK repeat units lie at residues 45–74, 79–108, and 159–188; these read NGMT…DVNC, HGYT…ETDV, and KLAG…NPLL. The Zn(2+) site is built by Cys-320, Cys-323, Cys-332, Cys-335, Cys-341, Cys-345, His-353, and Cys-357. The segment at 320–357 adopts an MYND-type zinc-finger fold; the sequence is CTTCGEKGASKRCSVCKMVIYCDQTCQKTHWFTHKKIC. Residues 374 to 384 are compositionally biased toward basic and acidic residues; that stretch reads EKRQEENHGKL. The tract at residues 374–441 is disordered; it reads EKRQEENHGK…APAGPQVSEE (68 aa).

In terms of assembly, interacts with the retinal-specific guanylyl cyclase GC1.

The protein localises to the cell projection. It localises to the cilium. Functionally, may be involved in the trafficking of signaling proteins to the cilia. The sequence is that of Ankyrin repeat and MYND domain-containing protein 2 (ANKMY2) from Homo sapiens (Human).